A 145-amino-acid chain; its full sequence is MNLHELKYNEGARKEKHRVGRGHAAGKGKQAGKGQSGQLKRTGSKPGFEGGQNPWYRRVPKRGFNNVNHIEYQVISIETLDAAFPDKAEINPEVLHEKRIARNKNLPIKLLANGATKKKFTIKLNAASKKAIELIEKAGGKVEVI.

The span at 1–13 shows a compositional bias: basic and acidic residues; that stretch reads MNLHELKYNEGAR. Positions 1-56 are disordered; sequence MNLHELKYNEGARKEKHRVGRGHAAGKGKQAGKGQSGQLKRTGSKPGFEGGQNPWY. Residues 14–26 are compositionally biased toward basic residues; it reads KEKHRVGRGHAAG.

Belongs to the universal ribosomal protein uL15 family. As to quaternary structure, part of the 50S ribosomal subunit.

Its function is as follows. Binds to the 23S rRNA. This chain is Large ribosomal subunit protein uL15, found in Mycoplasma mobile (strain ATCC 43663 / 163K / NCTC 11711) (Mesomycoplasma mobile).